We begin with the raw amino-acid sequence, 354 residues long: Methylthioribose-1-phosphate isomerase (354 aa).

Residues 48–50 (RGA), R95, and Q202 contribute to the substrate site. The active-site Proton donor is the D243. 253 to 254 (NK) contacts substrate.

The protein belongs to the eIF-2B alpha/beta/delta subunits family. MtnA subfamily.

The catalysed reaction is 5-(methylsulfanyl)-alpha-D-ribose 1-phosphate = 5-(methylsulfanyl)-D-ribulose 1-phosphate. It functions in the pathway amino-acid biosynthesis; L-methionine biosynthesis via salvage pathway; L-methionine from S-methyl-5-thio-alpha-D-ribose 1-phosphate: step 1/6. Catalyzes the interconversion of methylthioribose-1-phosphate (MTR-1-P) into methylthioribulose-1-phosphate (MTRu-1-P). In Roseiflexus castenholzii (strain DSM 13941 / HLO8), this protein is Methylthioribose-1-phosphate isomerase.